The primary structure comprises 165 residues: Endoribonuclease YbeY (165 aa).

Zn(2+) is bound by residues His-130, His-134, and His-140.

This sequence belongs to the endoribonuclease YbeY family. Zn(2+) serves as cofactor.

The protein resides in the cytoplasm. Functionally, single strand-specific metallo-endoribonuclease involved in late-stage 70S ribosome quality control and in maturation of the 3' terminus of the 16S rRNA. This Streptococcus pneumoniae serotype 2 (strain D39 / NCTC 7466) protein is Endoribonuclease YbeY.